The primary structure comprises 211 residues: Thiamine-phosphate synthase (211 aa).

4-amino-2-methyl-5-(diphosphooxymethyl)pyrimidine-binding positions include 37–41 (QLRIK) and Asn-69. Mg(2+)-binding residues include Asp-70 and Asp-89. Ser-108 contacts 4-amino-2-methyl-5-(diphosphooxymethyl)pyrimidine. A 2-[(2R,5Z)-2-carboxy-4-methylthiazol-5(2H)-ylidene]ethyl phosphate-binding site is contributed by 134–136 (TQT). Lys-137 serves as a coordination point for 4-amino-2-methyl-5-(diphosphooxymethyl)pyrimidine. 2-[(2R,5Z)-2-carboxy-4-methylthiazol-5(2H)-ylidene]ethyl phosphate contacts are provided by residues Gly-166 and 186-187 (VS).

The protein belongs to the thiamine-phosphate synthase family. Requires Mg(2+) as cofactor.

It catalyses the reaction 2-[(2R,5Z)-2-carboxy-4-methylthiazol-5(2H)-ylidene]ethyl phosphate + 4-amino-2-methyl-5-(diphosphooxymethyl)pyrimidine + 2 H(+) = thiamine phosphate + CO2 + diphosphate. The catalysed reaction is 2-(2-carboxy-4-methylthiazol-5-yl)ethyl phosphate + 4-amino-2-methyl-5-(diphosphooxymethyl)pyrimidine + 2 H(+) = thiamine phosphate + CO2 + diphosphate. The enzyme catalyses 4-methyl-5-(2-phosphooxyethyl)-thiazole + 4-amino-2-methyl-5-(diphosphooxymethyl)pyrimidine + H(+) = thiamine phosphate + diphosphate. It participates in cofactor biosynthesis; thiamine diphosphate biosynthesis; thiamine phosphate from 4-amino-2-methyl-5-diphosphomethylpyrimidine and 4-methyl-5-(2-phosphoethyl)-thiazole: step 1/1. In terms of biological role, condenses 4-methyl-5-(beta-hydroxyethyl)thiazole monophosphate (THZ-P) and 2-methyl-4-amino-5-hydroxymethyl pyrimidine pyrophosphate (HMP-PP) to form thiamine monophosphate (TMP). This chain is Thiamine-phosphate synthase, found in Enterobacter sp. (strain 638).